A 216-amino-acid polypeptide reads, in one-letter code: Small ribosomal subunit protein uS3c (216 aa).

The KH type-2 domain occupies 43–118 (IKNYIQKNRR…RLKIAITRVE (76 aa)).

The protein belongs to the universal ribosomal protein uS3 family. Part of the 30S ribosomal subunit.

It is found in the plastid. The protein localises to the chloroplast. This chain is Small ribosomal subunit protein uS3c (rps3), found in Dioscorea elephantipes (Elephant's foot yam).